Reading from the N-terminus, the 414-residue chain is 2,3-diketo-5-methylthiopentyl-1-phosphate enolase (414 aa).

The Proton acceptor role is filled by lysine 99. Residues lysine 148, 174–177 (KDDE), histidine 265, glycine 338, and 360–361 (GG) contribute to the substrate site. The Mg(2+) site is built by lysine 174, aspartate 176, and glutamate 177. Lysine 174 bears the N6-carboxylysine mark.

Belongs to the RuBisCO large chain family. Type IV subfamily. In terms of assembly, homodimer. Requires Mg(2+) as cofactor.

The enzyme catalyses 5-methylsulfanyl-2,3-dioxopentyl phosphate = 2-hydroxy-5-methylsulfanyl-3-oxopent-1-enyl phosphate. The protein operates within amino-acid biosynthesis; L-methionine biosynthesis via salvage pathway; L-methionine from S-methyl-5-thio-alpha-D-ribose 1-phosphate: step 3/6. Catalyzes the enolization of 2,3-diketo-5-methylthiopentyl-1-phosphate (DK-MTP-1-P) into 2-hydroxy-3-keto-5-methylthiopentenyl-1-phosphate (HK-MTPenyl-1-P). This chain is 2,3-diketo-5-methylthiopentyl-1-phosphate enolase, found in Bacillus cereus (strain AH187).